A 113-amino-acid polypeptide reads, in one-letter code: UPF0122 protein LCA_0713 (113 aa).

It belongs to the UPF0122 family.

In terms of biological role, might take part in the signal recognition particle (SRP) pathway. This is inferred from the conservation of its genetic proximity to ftsY/ffh. May be a regulatory protein. This Latilactobacillus sakei subsp. sakei (strain 23K) (Lactobacillus sakei subsp. sakei) protein is UPF0122 protein LCA_0713.